The following is a 175-amino-acid chain: MRAYWFDNLEGDQRQPHDSGRAVDPAYLSKLGVLYHHISSQSEVDELAKARDYKNRDEITVSPEKMGDIYEEKVKSFFHEHLHEDEEIRYILDGAGYFDVRSEGDDWVRIWLEKGDLIILPSGIYHRFTTDEQNYTKAMRLFKDEPKWTPLNRGEETDENQFRQEYLKLRQGLAA.

Fe(2+) is bound by residues histidine 81, histidine 83, glutamate 87, and histidine 126. Histidine 81, histidine 83, glutamate 87, and histidine 126 together coordinate Ni(2+).

Belongs to the acireductone dioxygenase (ARD) family. Requires Fe(2+) as cofactor. Ni(2+) is required as a cofactor.

Its subcellular location is the cytoplasm. It is found in the nucleus. The catalysed reaction is 1,2-dihydroxy-5-(methylsulfanyl)pent-1-en-3-one + O2 = 4-methylsulfanyl-2-oxobutanoate + formate + 2 H(+). It catalyses the reaction 1,2-dihydroxy-5-(methylsulfanyl)pent-1-en-3-one + O2 = 3-(methylsulfanyl)propanoate + CO + formate + 2 H(+). Its pathway is amino-acid biosynthesis; L-methionine biosynthesis via salvage pathway; L-methionine from S-methyl-5-thio-alpha-D-ribose 1-phosphate: step 5/6. Catalyzes 2 different reactions between oxygen and the acireductone 1,2-dihydroxy-3-keto-5-methylthiopentene (DHK-MTPene) depending upon the metal bound in the active site. Fe-containing acireductone dioxygenase (Fe-ARD) produces formate and 2-keto-4-methylthiobutyrate (KMTB), the alpha-ketoacid precursor of methionine in the methionine recycle pathway. Ni-containing acireductone dioxygenase (Ni-ARD) produces methylthiopropionate, carbon monoxide and formate, and does not lie on the methionine recycle pathway. The sequence is that of Acireductone dioxygenase from Phaeosphaeria nodorum (strain SN15 / ATCC MYA-4574 / FGSC 10173) (Glume blotch fungus).